The primary structure comprises 147 residues: Hemoglobin subunit beta-1 (147 aa).

In terms of domain architecture, Globin spans 3-147; it reads NLTAKERQLI…IADALGKGYH (145 aa). Positions 64 and 93 each coordinate heme b.

The protein belongs to the globin family. Heterotetramer of two alpha chains and two beta chains. In terms of tissue distribution, red blood cells.

In terms of biological role, involved in oxygen transport from the lung to the various peripheral tissues. In Xenopus tropicalis (Western clawed frog), this protein is Hemoglobin subunit beta-1 (hbb1).